A 187-amino-acid polypeptide reads, in one-letter code: Protein GrpE (187 aa).

A disordered region spans residues M1–N30.

This sequence belongs to the GrpE family. In terms of assembly, homodimer.

The protein resides in the cytoplasm. Functionally, participates actively in the response to hyperosmotic and heat shock by preventing the aggregation of stress-denatured proteins, in association with DnaK and GrpE. It is the nucleotide exchange factor for DnaK and may function as a thermosensor. Unfolded proteins bind initially to DnaJ; upon interaction with the DnaJ-bound protein, DnaK hydrolyzes its bound ATP, resulting in the formation of a stable complex. GrpE releases ADP from DnaK; ATP binding to DnaK triggers the release of the substrate protein, thus completing the reaction cycle. Several rounds of ATP-dependent interactions between DnaJ, DnaK and GrpE are required for fully efficient folding. The chain is Protein GrpE from Borreliella afzelii (strain PKo) (Borrelia afzelii).